A 460-amino-acid polypeptide reads, in one-letter code: Cysteine--tRNA ligase (460 aa).

A Zn(2+)-binding site is contributed by cysteine 28. The short motif at 30 to 40 (MTVYDYCHLGH) is the 'HIGH' region element. Cysteine 209, histidine 234, and glutamate 238 together coordinate Zn(2+). A 'KMSKS' region motif is present at residues 266–270 (KMSKS). Lysine 269 provides a ligand contact to ATP.

This sequence belongs to the class-I aminoacyl-tRNA synthetase family. As to quaternary structure, monomer. Zn(2+) serves as cofactor.

The protein resides in the cytoplasm. It carries out the reaction tRNA(Cys) + L-cysteine + ATP = L-cysteinyl-tRNA(Cys) + AMP + diphosphate. This chain is Cysteine--tRNA ligase, found in Pseudomonas putida (strain ATCC 700007 / DSM 6899 / JCM 31910 / BCRC 17059 / LMG 24140 / F1).